Here is a 319-residue protein sequence, read N- to C-terminus: Homeobox protein Hox-B5a (319 aa).

The interval 114 to 224 (SLLSPGSGDT…NTVGSEGQPP (111 aa)) is disordered. A compositionally biased stretch (low complexity) spans 128 to 155 (RSSSPRSEQSGSGNLSSTNLSSSTNISS). An Antp-type hexapeptide motif is present at residues 226–231 (IFPWMR). Positions 244–303 (GKRARTAYTRYQTLELEKEFHFNRYLTRRRRIEIAHALCLTERQIKIWFQNRRMKWKKDN) form a DNA-binding region, homeobox.

Belongs to the Antp homeobox family.

The protein localises to the nucleus. In terms of biological role, sequence-specific transcription factor which is part of a developmental regulatory system that provides cells with specific positional identities on the anterior-posterior axis. The chain is Homeobox protein Hox-B5a (hoxb5a) from Takifugu rubripes (Japanese pufferfish).